A 384-amino-acid chain; its full sequence is UDP-galactopyranose mutase (384 aa).

The first 23 residues, 1 to 23 (MKSKKILIVGAGFSGAVIGRQLA), serve as a signal peptide directing secretion. FAD contacts are provided by residues Ser-14, 33 to 34 (DQ), Asn-41, and 60 to 61 (HI). UDP-alpha-D-galactose contacts are provided by Asn-84, Phe-151, Thr-156, Trp-160, and Tyr-185. Position 219 (Phe-219) interacts with FAD. UDP-alpha-D-galactose is bound by residues Asn-270, Arg-280, and Tyr-314. Arg-343 serves as a coordination point for FAD. Tyr-349 contributes to the UDP-alpha-D-galactose binding site. 350-355 (LDMDVT) is a binding site for FAD.

Belongs to the UDP-galactopyranose/dTDP-fucopyranose mutase family. Homodimer. It depends on FAD as a cofactor.

It catalyses the reaction UDP-alpha-D-galactose = UDP-alpha-D-galactofuranose. It participates in bacterial outer membrane biogenesis; LPS O-antigen biosynthesis. Its function is as follows. Involved in the biosynthesis of the galactose-containing O-side-chain polysaccharide backbone structure of D-galactan I which is a key component of lipopolysaccharide (LPS). Catalyzes the interconversion through a 2-keto intermediate of uridine diphosphogalactopyranose (UDP-GalP) into uridine diphosphogalactofuranose (UDP-GalF) which is the biosynthetic precursor of galactofuranosyl residues. This is UDP-galactopyranose mutase (rfbD) from Klebsiella pneumoniae.